A 1679-amino-acid polypeptide reads, in one-letter code: AF4/FMR2 family member lilli (1679 aa).

Disordered stretches follow at residues Met1 to Asn21, Asn55 to Ile78, Arg124 to Val305, Leu406 to Asn539, Met580 to Trp609, Asp733 to Gly755, Gln783 to His1172, and Thr1197 to Gly1319. Residues Arg69–Ile78 are compositionally biased toward basic and acidic residues. 2 stretches are compositionally biased toward low complexity: residues Ser144 to Gln181 and Pro212 to Gly244. Position 421 is a phosphothreonine (Thr421). Residues Leu429–Ser442 are compositionally biased toward basic and acidic residues. A compositionally biased stretch (acidic residues) spans Leu444 to Asp455. Residues Ser451 and Ser453 each carry the phosphoserine modification. Low complexity predominate over residues Ser464–Ser484. Basic residues predominate over residues His492–Gln501. Residues Leu502–Leu532 are compositionally biased toward low complexity. The span at Ala582 to Ser591 shows a compositional bias: gly residues. Residues Asn598 to Trp609 are compositionally biased toward polar residues. The segment covering Asp733–Ala752 has biased composition (low complexity). Positions Gln783–Val796 are enriched in polar residues. Residues Gln810–Ala820 are compositionally biased toward basic residues. A phosphoserine mark is found at Ser829 and Ser830. Residues Lys859–Ser871 constitute a DNA-binding region (a.T hook). The segment covering Gln868–Ala906 has biased composition (low complexity). 2 positions are modified to phosphoserine: Ser879 and Ser881. Residues Ser917–Thr927 show a composition bias toward polar residues. Low complexity-rich tracts occupy residues Ser957 to Ser973 and Gly1001 to Ser1012. A compositionally biased stretch (polar residues) spans Thr1019–Ala1030. Positions Ser1042–Ser1068 are enriched in low complexity. A compositionally biased stretch (basic and acidic residues) spans Glu1073–Lys1090. Positions Gln1130–Ala1140 are enriched in pro residues. Residues Pro1198–Asn1213 are compositionally biased toward polar residues. Composition is skewed to basic and acidic residues over residues Glu1234–Phe1251 and Phe1260–Pro1288. At Ser1368 the chain carries Phosphoserine. Phosphothreonine is present on Thr1370. The segment covering Gly1569–Asn1589 has biased composition (low complexity). A disordered region spans residues Gly1569–Arg1594.

It belongs to the AF4 family.

It is found in the nucleus. Functionally, has a role in transcriptional regulation. Acts in parallel with the Ras/MAPK and the PI3K/PKB pathways in the control of cell identity and cellular growth. Essential for regulation of the cytoskeleton and cell growth but not for cell proliferation or growth rate. Required specifically for the microtubule-based basal transport of lipid droplets. Plays a partially redundant function downstream of Raf in cell fate specification in the developing eye. Pair-rule protein that regulates embryonic cellularization, gastrulation and segmentation. In Drosophila erecta (Fruit fly), this protein is AF4/FMR2 family member lilli.